The following is a 73-amino-acid chain: Protein SlyX homolog (73 aa).

It belongs to the SlyX family.

In Histophilus somni (strain 2336) (Haemophilus somnus), this protein is Protein SlyX homolog.